The sequence spans 108 residues: Phosphoribosyl-ATP pyrophosphatase (108 aa).

It belongs to the PRA-PH family.

The protein resides in the cytoplasm. The enzyme catalyses 1-(5-phospho-beta-D-ribosyl)-ATP + H2O = 1-(5-phospho-beta-D-ribosyl)-5'-AMP + diphosphate + H(+). It functions in the pathway amino-acid biosynthesis; L-histidine biosynthesis; L-histidine from 5-phospho-alpha-D-ribose 1-diphosphate: step 2/9. This Trichlorobacter lovleyi (strain ATCC BAA-1151 / DSM 17278 / SZ) (Geobacter lovleyi) protein is Phosphoribosyl-ATP pyrophosphatase.